The primary structure comprises 119 residues: uncharacterized protein (119 aa).

Residues 86–119 (KKQRMKMLTEQEEEEEEEEEEPPKPKKKVINRKK) form a disordered region. Residues 95-106 (EQEEEEEEEEEE) show a composition bias toward acidic residues. Residues 110–119 (PKKKVINRKK) are compositionally biased toward basic residues.

This is an uncharacterized protein from Sputnik virophage.